A 118-amino-acid polypeptide reads, in one-letter code: Cytochrome b-c1 complex subunit 7 (118 aa).

The igE-binding. Immunodominant epitope; induces specific IgE antibody production in mice. Causes degranulation of rat basophilic leukemia (RBL) cells and the release of beta-hexosaminidase from them stretch occupies residues 1-32; that stretch reads MVHLTKTLRFINNPGFRKFYYGLQGYNKYGLY.

The protein belongs to the UQCRB/QCR7 family. As to quaternary structure, component of the ubiquinol-cytochrome c oxidoreductase (cytochrome b-c1 complex, complex III, CIII), a multisubunit enzyme composed of 3 respiratory subunits cytochrome b, cytochrome c1 and Rieske protein, 2 core protein subunits, and additional low-molecular weight protein subunits. The complex exists as an obligatory dimer and forms supercomplexes (SCs) in the inner mitochondrial membrane with cytochrome c oxidase (complex IV, CIV).

It localises to the mitochondrion inner membrane. Functionally, component of the ubiquinol-cytochrome c oxidoreductase, a multisubunit transmembrane complex that is part of the mitochondrial electron transport chain which drives oxidative phosphorylation. The respiratory chain contains 3 multisubunit complexes succinate dehydrogenase (complex II, CII), ubiquinol-cytochrome c oxidoreductase (cytochrome b-c1 complex, complex III, CIII) and cytochrome c oxidase (complex IV, CIV), that cooperate to transfer electrons derived from NADH and succinate to molecular oxygen, creating an electrochemical gradient over the inner membrane that drives transmembrane transport and the ATP synthase. The cytochrome b-c1 complex catalyzes electron transfer from ubiquinol to cytochrome c, linking this redox reaction to translocation of protons across the mitochondrial inner membrane, with protons being carried across the membrane as hydrogens on the quinol. In the process called Q cycle, 2 protons are consumed from the matrix, 4 protons are released into the intermembrane space and 2 electrons are passed to cytochrome c. This chain is Cytochrome b-c1 complex subunit 7, found in Dermatophagoides pteronyssinus (European house dust mite).